Reading from the N-terminus, the 140-residue chain is Large ribosomal subunit protein uL14 (140 aa).

Ser-17 carries the post-translational modification Phosphoserine. Tyr-38 bears the Phosphotyrosine mark.

It belongs to the universal ribosomal protein uL14 family. Component of the large ribosomal subunit.

The protein localises to the cytoplasm. Functionally, component of the large ribosomal subunit. The ribosome is a large ribonucleoprotein complex responsible for the synthesis of proteins in the cell. In Pongo abelii (Sumatran orangutan), this protein is Large ribosomal subunit protein uL14 (RPL23).